Reading from the N-terminus, the 202-residue chain is Small ribosomal subunit protein uS4 (202 aa).

The interval 16-42 is disordered; the sequence is GELPGLSRKNPRRAYPPGQHGQARKKR. One can recognise an S4 RNA-binding domain in the interval 90 to 151; sequence MRLDNTVFRL…QERSRRLVEA (62 aa).

The protein belongs to the universal ribosomal protein uS4 family. Part of the 30S ribosomal subunit. Contacts protein S5. The interaction surface between S4 and S5 is involved in control of translational fidelity.

Functionally, one of the primary rRNA binding proteins, it binds directly to 16S rRNA where it nucleates assembly of the body of the 30S subunit. With S5 and S12 plays an important role in translational accuracy. This Rippkaea orientalis (strain PCC 8801 / RF-1) (Cyanothece sp. (strain PCC 8801)) protein is Small ribosomal subunit protein uS4.